Here is a 439-residue protein sequence, read N- to C-terminus: F-box/FBD/LRR-repeat protein At5g56570 (439 aa).

In terms of domain architecture, F-box spans Pro35–Phe81. LRR repeat units lie at residues Cys155–Leu177 and Val223–Ile246. Residues Val361 to Thr411 form the FBD domain.

This chain is F-box/FBD/LRR-repeat protein At5g56570, found in Arabidopsis thaliana (Mouse-ear cress).